Consider the following 239-residue polypeptide: Succinate dehydrogenase [ubiquinone] iron-sulfur subunit (239 aa).

The region spanning 11–100 (FKVYRWNPDK…EMKIYPLPHM (90 aa)) is the 2Fe-2S ferredoxin-type domain. Residues Cys-61, Cys-66, Cys-69, and Cys-81 each contribute to the [2Fe-2S] cluster site. The 4Fe-4S ferredoxin-type domain occupies 141–171 (DREKLDGLYECVLCACCSTSCPSYWWNSDKY). [4Fe-4S] cluster-binding residues include Cys-151, Cys-154, and Cys-157. Cys-161 is a [3Fe-4S] cluster binding site. Trp-166 lines the a ubiquinone pocket. [3Fe-4S] cluster-binding residues include Cys-208 and Cys-214. Cys-218 contributes to the [4Fe-4S] cluster binding site.

This sequence belongs to the succinate dehydrogenase/fumarate reductase iron-sulfur protein family. Component of complex II composed of four subunits: a flavoprotein (FP), an iron-sulfur protein (IP), and a cytochrome b composed of a large and a small subunit. [2Fe-2S] cluster serves as cofactor. It depends on [3Fe-4S] cluster as a cofactor. [4Fe-4S] cluster is required as a cofactor.

The protein resides in the mitochondrion inner membrane. It carries out the reaction a quinone + succinate = fumarate + a quinol. The protein operates within carbohydrate metabolism; tricarboxylic acid cycle; fumarate from succinate (eukaryal route): step 1/1. Functionally, iron-sulfur protein (IP) subunit of succinate dehydrogenase (SDH) that is involved in complex II of the mitochondrial electron transport chain and is responsible for transferring electrons from succinate to ubiquinone (coenzyme Q). This chain is Succinate dehydrogenase [ubiquinone] iron-sulfur subunit (SDH2), found in Reclinomonas americana.